Consider the following 337-residue polypeptide: S-adenosylmethionine:tRNA ribosyltransferase-isomerase (337 aa).

Belongs to the QueA family. In terms of assembly, monomer.

Its subcellular location is the cytoplasm. The enzyme catalyses 7-aminomethyl-7-carbaguanosine(34) in tRNA + S-adenosyl-L-methionine = epoxyqueuosine(34) in tRNA + adenine + L-methionine + 2 H(+). The protein operates within tRNA modification; tRNA-queuosine biosynthesis. Its function is as follows. Transfers and isomerizes the ribose moiety from AdoMet to the 7-aminomethyl group of 7-deazaguanine (preQ1-tRNA) to give epoxyqueuosine (oQ-tRNA). The sequence is that of S-adenosylmethionine:tRNA ribosyltransferase-isomerase from Legionella pneumophila (strain Lens).